The primary structure comprises 501 residues: uncharacterized protein (501 aa).

Residues I26–M46 form a helical membrane-spanning segment. Disordered regions lie at residues R316–R384 and E409–N501. The span at R476–P490 shows a compositional bias: low complexity.

The protein resides in the membrane. This is an uncharacterized protein from Homo sapiens (Human).